An 89-amino-acid chain; its full sequence is Small ribosomal subunit protein uS14 (89 aa).

Belongs to the universal ribosomal protein uS14 family. As to quaternary structure, part of the 30S ribosomal subunit. Contacts proteins S3 and S10.

Its function is as follows. Binds 16S rRNA, required for the assembly of 30S particles and may also be responsible for determining the conformation of the 16S rRNA at the A site. The sequence is that of Small ribosomal subunit protein uS14 from Lacticaseibacillus casei (strain BL23) (Lactobacillus casei).